Here is a 65-residue protein sequence, read N- to C-terminus: Beta-defensin 106A (65 aa).

Positions 1–20 (MRTFLFLFAVLFFLTPAKNA) are cleaved as a signal peptide. Intrachain disulfides connect C26/C53, C33/C47, and C37/C54.

Belongs to the beta-defensin family. Monomer. Interacts with CCR2 (via extracellular N-terminal region); this interaction may preferentially require specific tyrosine sulfation on CCR2.

The protein resides in the secreted. It localises to the membrane. Functionally, has antibacterial activity. Acts as a ligand for C-C chemokine receptor CCR2. The polypeptide is Beta-defensin 106A (DEFB106A) (Gorilla gorilla gorilla (Western lowland gorilla)).